A 446-amino-acid chain; its full sequence is tRNA modification GTPase MnmE (446 aa).

R22, E80, and K119 together coordinate (6S)-5-formyl-5,6,7,8-tetrahydrofolate. The TrmE-type G domain maps to 215–370 (GLSLVIAGRP…LKKVIKQVVG (156 aa)). K(+) is bound at residue N225. GTP contacts are provided by residues 225 to 230 (NAGKST), 244 to 250 (TEIAGTT), and 269 to 272 (DTAG). S229 provides a ligand contact to Mg(2+). 3 residues coordinate K(+): T244, I246, and T249. T250 contributes to the Mg(2+) binding site. K446 serves as a coordination point for (6S)-5-formyl-5,6,7,8-tetrahydrofolate.

It belongs to the TRAFAC class TrmE-Era-EngA-EngB-Septin-like GTPase superfamily. TrmE GTPase family. Homodimer. Heterotetramer of two MnmE and two MnmG subunits. Requires K(+) as cofactor.

The protein resides in the cytoplasm. Its function is as follows. Exhibits a very high intrinsic GTPase hydrolysis rate. Involved in the addition of a carboxymethylaminomethyl (cmnm) group at the wobble position (U34) of certain tRNAs, forming tRNA-cmnm(5)s(2)U34. The chain is tRNA modification GTPase MnmE from Legionella pneumophila subsp. pneumophila (strain Philadelphia 1 / ATCC 33152 / DSM 7513).